The following is a 95-amino-acid chain: Aspartyl/glutamyl-tRNA(Asn/Gln) amidotransferase subunit C (95 aa).

Belongs to the GatC family. Heterotrimer of A, B and C subunits.

It catalyses the reaction L-glutamyl-tRNA(Gln) + L-glutamine + ATP + H2O = L-glutaminyl-tRNA(Gln) + L-glutamate + ADP + phosphate + H(+). The enzyme catalyses L-aspartyl-tRNA(Asn) + L-glutamine + ATP + H2O = L-asparaginyl-tRNA(Asn) + L-glutamate + ADP + phosphate + 2 H(+). Allows the formation of correctly charged Asn-tRNA(Asn) or Gln-tRNA(Gln) through the transamidation of misacylated Asp-tRNA(Asn) or Glu-tRNA(Gln) in organisms which lack either or both of asparaginyl-tRNA or glutaminyl-tRNA synthetases. The reaction takes place in the presence of glutamine and ATP through an activated phospho-Asp-tRNA(Asn) or phospho-Glu-tRNA(Gln). This chain is Aspartyl/glutamyl-tRNA(Asn/Gln) amidotransferase subunit C, found in Thermodesulfovibrio yellowstonii (strain ATCC 51303 / DSM 11347 / YP87).